The sequence spans 340 residues: MTDHALLLVNLGSPASTSVADVRSYLNQFLMDPYVIDLPWPVRRLLVSLILIKRPEQSAHAYASIWWEEGSPLVVLSRRLQKVMSEQWKQGPVELAMRYGEPSIESVLLKLVAQGQRKITLAPLYPQFADSTVTTVVEEARRVVREHKLDVQFSVLQPFYDQPEYIEALEASTRPHLQQPFDHLLLSFHGLPERHLNKLNPGHSLDGAGDCCAESSPQVLANCYRGQCFRTARAFAQQMGLADGQWSVSFQSRLGRAKWIEPYTEARLDELGKQGVKKLLVMCPAFVADCIETLEEIGDRGREQFREAGGEELVLIPCLNDDPQWAKALNALCERAPLAL.

2 residues coordinate Fe cation: histidine 189 and glutamate 292.

This sequence belongs to the ferrochelatase family.

Its subcellular location is the cytoplasm. It catalyses the reaction heme b + 2 H(+) = protoporphyrin IX + Fe(2+). It functions in the pathway porphyrin-containing compound metabolism; protoheme biosynthesis; protoheme from protoporphyrin-IX: step 1/1. Functionally, catalyzes the ferrous insertion into protoporphyrin IX. This is Ferrochelatase from Pseudomonas fluorescens (strain ATCC BAA-477 / NRRL B-23932 / Pf-5).